The following is a 400-amino-acid chain: Tryptophan 2,3-dioxygenase (400 aa).

Residues 75–79 (FIIIH) and Arg-146 each bind substrate. Residue His-332 participates in heme binding. Thr-346 is a substrate binding site.

It belongs to the tryptophan 2,3-dioxygenase family. Homotetramer. Dimer of dimers. Heme is required as a cofactor.

It catalyses the reaction L-tryptophan + O2 = N-formyl-L-kynurenine. The protein operates within amino-acid degradation; L-tryptophan degradation via kynurenine pathway; L-kynurenine from L-tryptophan: step 1/2. Functionally, heme-dependent dioxygenase that catalyzes the oxidative cleavage of the L-tryptophan (L-Trp) pyrrole ring and converts L-tryptophan to N-formyl-L-kynurenine. Catalyzes the oxidative cleavage of the indole moiety. This chain is Tryptophan 2,3-dioxygenase, found in Dictyostelium discoideum (Social amoeba).